Here is a 122-residue protein sequence, read N- to C-terminus: MIQQESRLRVADNSGAKELLVIRVLGGTKRKYAAIGDIVVCSVKSAQPGGMVKKGDVVKAVIVRTTKPLGRADGSYIRFDDNAAVIIKDDKNPVGTRIFGSVTRELRANNFMKIISLAPEVL.

It belongs to the universal ribosomal protein uL14 family. Part of the 50S ribosomal subunit. Forms a cluster with proteins L3 and L19. In the 70S ribosome, L14 and L19 interact and together make contacts with the 16S rRNA in bridges B5 and B8.

Binds to 23S rRNA. Forms part of two intersubunit bridges in the 70S ribosome. The polypeptide is Large ribosomal subunit protein uL14 (Finegoldia magna (strain ATCC 29328 / DSM 20472 / WAL 2508) (Peptostreptococcus magnus)).